Consider the following 54-residue polypeptide: Large ribosomal subunit protein bL32 (54 aa).

Belongs to the bacterial ribosomal protein bL32 family.

In Buchnera aphidicola subsp. Baizongia pistaciae (strain Bp), this protein is Large ribosomal subunit protein bL32.